Consider the following 238-residue polypeptide: 3,4-dihydroxy-2-butanone 4-phosphate synthase (238 aa).

D-ribulose 5-phosphate-binding positions include 26 to 27 (RE), D31, 166 to 170 (RVGQT), and E190. E27 serves as a coordination point for Mg(2+).

This sequence belongs to the DHBP synthase family. Homodimer. Mg(2+) is required as a cofactor. Requires Mn(2+) as cofactor.

The enzyme catalyses D-ribulose 5-phosphate = (2S)-2-hydroxy-3-oxobutyl phosphate + formate + H(+). The protein operates within cofactor biosynthesis; riboflavin biosynthesis; 2-hydroxy-3-oxobutyl phosphate from D-ribulose 5-phosphate: step 1/1. In terms of biological role, catalyzes the conversion of D-ribulose 5-phosphate to formate and 3,4-dihydroxy-2-butanone 4-phosphate. This is 3,4-dihydroxy-2-butanone 4-phosphate synthase from Archaeoglobus fulgidus (strain ATCC 49558 / DSM 4304 / JCM 9628 / NBRC 100126 / VC-16).